The following is a 186-amino-acid chain: Translation initiation factor IF-3 (186 aa).

This sequence belongs to the IF-3 family. As to quaternary structure, monomer.

The protein resides in the cytoplasm. Its function is as follows. IF-3 binds to the 30S ribosomal subunit and shifts the equilibrium between 70S ribosomes and their 50S and 30S subunits in favor of the free subunits, thus enhancing the availability of 30S subunits on which protein synthesis initiation begins. The protein is Translation initiation factor IF-3 of Chlamydia muridarum (strain MoPn / Nigg).